The chain runs to 226 residues: RING-H2 finger protein ATL75 (226 aa).

The helical transmembrane segment at leucine 60–isoleucine 80 threads the bilayer. The RING-type; atypical zinc-finger motif lies at cysteine 136 to arginine 178.

This sequence belongs to the RING-type zinc finger family. ATL subfamily.

It is found in the membrane. It catalyses the reaction S-ubiquitinyl-[E2 ubiquitin-conjugating enzyme]-L-cysteine + [acceptor protein]-L-lysine = [E2 ubiquitin-conjugating enzyme]-L-cysteine + N(6)-ubiquitinyl-[acceptor protein]-L-lysine.. It participates in protein modification; protein ubiquitination. In Arabidopsis thaliana (Mouse-ear cress), this protein is RING-H2 finger protein ATL75 (ATL75).